The following is a 157-amino-acid chain: Thioredoxin-T (157 aa).

A Thioredoxin domain is found at 2 to 107 (VYPVRNKDDL…LAKLMEKHAG (106 aa)). An intrachain disulfide couples C32 to C35. The tract at residues 132-157 (ESSESDNDNNNVNEVSAHDENAVLEH) is disordered. Basic and acidic residues predominate over residues 147–157 (SAHDENAVLEH).

Belongs to the thioredoxin family. As to expression, testis specific. Not expressed in the embryo. Becomes progressively more strongly expressed during larval and pupal development. In testis, it is strongly expressed in young spermatocytes, and postmeiotic spermatid stages, then expression decreases at the nuclear elongation stage. Strongly expressed in the waste bag, in which material no longer needed for the mature sperm is eliminated. Not expressed in the stem cells and spermatogonial cells.

The protein localises to the nucleus. It is found in the chromosome. Functionally, probably participates in various redox reactions through the reversible oxidation of its active center dithiol to a disulfide and catalyzes dithiol-disulfide exchange reactions. Its tissue specificity suggests a regulatory role in the germline. The polypeptide is Thioredoxin-T (TrxT) (Drosophila melanogaster (Fruit fly)).